The primary structure comprises 447 residues: Probable glycine dehydrogenase (decarboxylating) subunit 1 (447 aa).

It belongs to the GcvP family. N-terminal subunit subfamily. In terms of assembly, the glycine cleavage system is composed of four proteins: P, T, L and H. In this organism, the P 'protein' is a heterodimer of two subunits.

The catalysed reaction is N(6)-[(R)-lipoyl]-L-lysyl-[glycine-cleavage complex H protein] + glycine + H(+) = N(6)-[(R)-S(8)-aminomethyldihydrolipoyl]-L-lysyl-[glycine-cleavage complex H protein] + CO2. The glycine cleavage system catalyzes the degradation of glycine. The P protein binds the alpha-amino group of glycine through its pyridoxal phosphate cofactor; CO(2) is released and the remaining methylamine moiety is then transferred to the lipoamide cofactor of the H protein. This Bacillus cereus (strain G9842) protein is Probable glycine dehydrogenase (decarboxylating) subunit 1.